Here is a 299-residue protein sequence, read N- to C-terminus: Inosose dehydratase (299 aa).

The protein belongs to the IolE/MocC family. Requires glutathione as cofactor. It depends on Co(2+) as a cofactor. Mn(2+) is required as a cofactor.

It carries out the reaction scyllo-inosose = 3D-3,5/4-trihydroxycyclohexane-1,2-dione + H2O. Functionally, catalyzes the dehydration of inosose (2-keto-myo-inositol, 2KMI or 2,4,6/3,5-pentahydroxycyclohexanone) to 3D-(3,5/4)-trihydroxycyclohexane-1,2-dione (D-2,3-diketo-4-deoxy-epi-inositol). This is Inosose dehydratase from Klebsiella pneumoniae (strain 342).